The chain runs to 194 residues: Thymidylate kinase (194 aa).

7–14 (GVDCVGKS) is a binding site for ATP.

The protein belongs to the thymidylate kinase family.

It catalyses the reaction dTMP + ATP = dTDP + ADP. Functionally, phosphorylation of dTMP to form dTDP in both de novo and salvage pathways of dTTP synthesis. The sequence is that of Thymidylate kinase from Campylobacter lari (strain RM2100 / D67 / ATCC BAA-1060).